A 572-amino-acid chain; its full sequence is MKVSELFMPTLKETPSDAEIESHKLMLRSGFMRQLSSGIYVYLPLGYRVLRKIENIVREEMDRSGAQEVHMSALMPKELWEESGRWAVFGPEMFRIKDRNEREYCLGPTHEEAFTYIVRNEISSYRDLPKILYQIQTKFRDERRPRFGVMRCREFTMKDAYSFDIDENGLDISYQKMYDAYVRIFKRCGLDVKIVEADTGAMGGASSHEFMVPSSVGEAEIAYCKACGYAANLEKAECLDEPVENKEEPKEKQEVYTPNVRTIEELVSFLGIDSTRFVKTMIYKADDKFVAVLVRGDREVNETKLKNLLKATDLELASAEDVEKITGAKVGFAGPIGLSIDVYADNEVKYLKNFVVGANKTDYHIKNVNLSDFKVTKFTDLRNITQDDLCPKCRSQKVTIERGIEVGHIFKLGTKYTQAFNCVYTDEKGEKKLMIMGCYGIGINRTAAAIIEQMHDEDGIIWPITVAPYEVIIVPVNVKDENQKKIAFEIYENLQRNGVEVLIDDRDERAGVKFKDADLIGIPFRVTVGKKISEGKLEIRNRRTKESFEVEIEKAIEVVINLIREEKAKYQI.

Belongs to the class-II aminoacyl-tRNA synthetase family. ProS type 1 subfamily. As to quaternary structure, homodimer.

Its subcellular location is the cytoplasm. It catalyses the reaction tRNA(Pro) + L-proline + ATP = L-prolyl-tRNA(Pro) + AMP + diphosphate. Its function is as follows. Catalyzes the attachment of proline to tRNA(Pro) in a two-step reaction: proline is first activated by ATP to form Pro-AMP and then transferred to the acceptor end of tRNA(Pro). As ProRS can inadvertently accommodate and process non-cognate amino acids such as alanine and cysteine, to avoid such errors it has two additional distinct editing activities against alanine. One activity is designated as 'pretransfer' editing and involves the tRNA(Pro)-independent hydrolysis of activated Ala-AMP. The other activity is designated 'posttransfer' editing and involves deacylation of mischarged Ala-tRNA(Pro). The misacylated Cys-tRNA(Pro) is not edited by ProRS. The protein is Proline--tRNA ligase of Caldicellulosiruptor bescii (strain ATCC BAA-1888 / DSM 6725 / KCTC 15123 / Z-1320) (Anaerocellum thermophilum).